The sequence spans 196 residues: Holliday junction branch migration complex subunit RuvA (196 aa).

The tract at residues 1-63 (MYDYIKGKLS…DDAHLLFGFH (63 aa)) is domain I. The interval 64–142 (TENEKEIFLN…EASGESATSR (79 aa)) is domain II. Residues 143–148 (KVSSEQ) are flexible linker. Positions 148–196 (QNSNLEEAMEALLALGYKATELKKVKAFFEGTNETVEQYIKSSLKMLMK) are domain III.

This sequence belongs to the RuvA family. As to quaternary structure, homotetramer. Forms an RuvA(8)-RuvB(12)-Holliday junction (HJ) complex. HJ DNA is sandwiched between 2 RuvA tetramers; dsDNA enters through RuvA and exits via RuvB. An RuvB hexamer assembles on each DNA strand where it exits the tetramer. Each RuvB hexamer is contacted by two RuvA subunits (via domain III) on 2 adjacent RuvB subunits; this complex drives branch migration. In the full resolvosome a probable DNA-RuvA(4)-RuvB(12)-RuvC(2) complex forms which resolves the HJ.

It localises to the cytoplasm. In terms of biological role, the RuvA-RuvB-RuvC complex processes Holliday junction (HJ) DNA during genetic recombination and DNA repair, while the RuvA-RuvB complex plays an important role in the rescue of blocked DNA replication forks via replication fork reversal (RFR). RuvA specifically binds to HJ cruciform DNA, conferring on it an open structure. The RuvB hexamer acts as an ATP-dependent pump, pulling dsDNA into and through the RuvAB complex. HJ branch migration allows RuvC to scan DNA until it finds its consensus sequence, where it cleaves and resolves the cruciform DNA. This chain is Holliday junction branch migration complex subunit RuvA, found in Streptococcus agalactiae serotype Ia (strain ATCC 27591 / A909 / CDC SS700).